The primary structure comprises 262 residues: Snake venom serine proteinase 9 (262 aa).

Residues 1 to 18 (MVLIRVLANLLILQLSYA) form the signal peptide. Residues 19-24 (QKSSEL) constitute a propeptide that is removed on maturation. The region spanning 25–253 (VIGGDECNID…HLDWIQSIIA (229 aa)) is the Peptidase S1 domain. Disulfide bonds link Cys-31–Cys-165, Cys-52–Cys-68, Cys-144–Cys-214, Cys-176–Cys-193, and Cys-204–Cys-229. Catalysis depends on His-67, which acts as the Charge relay system. N-linked (GlcNAc...) asparagine glycosylation is present at Asn-105. Residue Asp-112 is the Charge relay system of the active site. Ser-208 (charge relay system) is an active-site residue.

The protein belongs to the peptidase S1 family. Snake venom subfamily. In terms of assembly, monomer. Expressed by the venom gland.

The protein resides in the secreted. Functionally, snake venom serine protease that may act in the hemostasis system of the prey. In Crotalus adamanteus (Eastern diamondback rattlesnake), this protein is Snake venom serine proteinase 9.